Here is a 232-residue protein sequence, read N- to C-terminus: Proteasome subunit alpha type-2 (232 aa).

It belongs to the peptidase T1A family. As to quaternary structure, the 26S proteasome consists of a 20S proteasome core and two 19S regulatory subunits. The 20S proteasome core is composed of 28 subunits that are arranged in four stacked rings, resulting in a barrel-shaped structure. The two end rings are each formed by seven alpha subunits, and the two central rings are each formed by seven beta subunits. The catalytic chamber with the active sites is on the inside of the barrel.

It is found in the cytoplasm. The protein localises to the nucleus. The proteasome is a multicatalytic proteinase complex which is characterized by its ability to cleave peptides with Arg, Phe, Tyr, Leu, and Glu adjacent to the leaving group at neutral or slightly basic pH. The proteasome has an ATP-dependent proteolytic activity. This is Proteasome subunit alpha type-2 (psmA2) from Dictyostelium discoideum (Social amoeba).